The primary structure comprises 77 residues: uncharacterized protein (77 aa).

Disordered regions lie at residues M1 to N34 and L56 to R77. Basic and acidic residues predominate over residues D8–D20. Basic residues predominate over residues P25 to N34. Basic and acidic residues predominate over residues L56–R70.

This is an uncharacterized protein from Dictyostelium discoideum (Social amoeba).